Here is a 253-residue protein sequence, read N- to C-terminus: Cyclin-C1-1 (253 aa).

It belongs to the cyclin family. Cyclin C subfamily.

In Arabidopsis thaliana (Mouse-ear cress), this protein is Cyclin-C1-1 (CYCC1-1).